The sequence spans 555 residues: Connector enhancer of kinase suppressor of ras 3 (555 aa).

The region spanning 7–72 (WSPKQVVDWT…LEAVDLLCAL (66 aa)) is the SAM domain. Positions 80-174 (TMKNLVLKLR…TAVQKDCLIA (95 aa)) constitute a CRIC domain. Residues 211–293 (EVHLPNVRPG…GVVLLLKKRP (83 aa)) enclose the PDZ domain. Disordered regions lie at residues 308 to 333 (RWKPPLVQTSPPPTTTQSPESTMDAS), 362 to 389 (SFGYRGHSKSKQPLPVRKGSESPNSFLD), and 518 to 538 (PFQEEGSKKKSASSSAKASSG). The span at 311–329 (PPLVQTSPPPTTTQSPEST) shows a compositional bias: low complexity. The DUF1170 domain maps to 325–546 (SPESTMDASL…SGEPSLLVSW (222 aa)). Residues serine 381 and serine 383 each carry the phosphoserine modification.

The protein belongs to the CNKSR family. Interacts with epithelial sodium channel ENaC. Interacts directly with SCNN1A (ENaC subunit alpha) and SCNN1B (ENaC subunit beta) C-terminal tails. Interacts with ENaC regulatory proteins NEDD4L, RAF1 and SGK1. In terms of tissue distribution, expressed in kidney.

It is found in the cytoplasm. It localises to the apical cell membrane. Its function is as follows. Involved in transepithelial sodium transport. Regulates aldosterone-induced and epithelial sodium channel (ENaC)-mediated sodium transport through regulation of ENaC cell surface expression. Acts as a scaffold protein coordinating the assembly of an ENaC-regulatory complex (ERC). This Mus musculus (Mouse) protein is Connector enhancer of kinase suppressor of ras 3 (Cnksr3).